A 90-amino-acid polypeptide reads, in one-letter code: RNA-binding protein Hfq (90 aa).

One can recognise a Sm domain in the interval 9–68; sequence EPFLNTLRKEKVPVSIYLVNGIKLQGQIESFDQFVVLLRNNVNQMVYKHAISTIVPARRV.

The protein belongs to the Hfq family. In terms of assembly, homohexamer.

In terms of biological role, RNA chaperone that binds small regulatory RNA (sRNAs) and mRNAs to facilitate mRNA translational regulation in response to envelope stress, environmental stress and changes in metabolite concentrations. Also binds with high specificity to tRNAs. The polypeptide is RNA-binding protein Hfq (Halorhodospira halophila (strain DSM 244 / SL1) (Ectothiorhodospira halophila (strain DSM 244 / SL1))).